We begin with the raw amino-acid sequence, 749 residues long: Taperin (749 aa).

The tract at residues 144–348 (PAAPCRRGSP…IRPSSKPDME (205 aa)) is disordered. 3 stretches are compositionally biased toward polar residues: residues 169–179 (SAATRTPTNRS), 230–239 (LQKTGSNSFT), and 250–266 (VNRS…SPTG). Serine 274 bears the Phosphoserine mark. The segment covering 323-335 (QRQWVSSATSAND) has biased composition (polar residues). Residues 337 to 347 (FEIRPSSKPDM) show a composition bias toward basic and acidic residues. A phosphoserine mark is found at serine 401, serine 457, and serine 501. 3 disordered regions span residues 502–586 (EEEA…TTLE), 636–673 (FEYP…SEKP), and 730–749 (LTPA…ALYF). Composition is skewed to polar residues over residues 534–544 (ELLNRGSNTFT) and 558–570 (HLSQ…QQGA). Over residues 647–668 (EEAEEEEEEEGEEDGEEEEVGP) the composition is skewed to acidic residues.

The protein belongs to the taperin family. Interacts with GRXCR2; the interaction restricts TPRN to the stereocilum basal region. Interacts with actin ACTB; the interaction may stabilize stereocilia. Interacts with CLIC5. Interacts with PTPRQ. TPRN, CLIC5 and PTPQR form concentric rings at the base of stereocilia and may form a complex. Interacts with phosphatase PPP1CA; the interaction results in inhibition of PPP1CA phosphatase activity. Interacts with DNA damage response proteins XRCC6/KU70, XRCC5/KU80, PARP1, TOP1 and TOP2A; these interactions recruit TPRN to sites of DNA damage where it may play a role in DNA repair. As to expression, in the organ of Corti, expressed in the inner ear hair cell stereocilia and the supporting cells (at protein level). Expressed in the sensory epithelia of the organ of Corti and vestibular end organs and, to a lesser extent, in Reisner's membrane and the spiral ligament (at protein level). At postnatal day 2, expression is detected in cochlea, liver, brain, kidney, heart and lung.

The protein localises to the cell projection. Its subcellular location is the stereocilium. It is found in the microvillus. The protein resides in the nucleus. It localises to the nucleoplasm. The protein localises to the cytoplasm. In terms of biological role, essential for hearing. Required for maintenance of stereocilia on both inner and outer hair cells. Necessary for the integrity of the stereociliary rootlet. May act as an actin cytoskeleton regulator involved in the regulation of actin dynamics at the pointed end in hair cells. Forms rings at the base of stereocilia and binds actin filaments in the stereocilia which may stabilize the stereocilia. Acts as a strong inhibitor of PPP1CA phosphatase activity. Recruited to sites of DNA damage and may play a role in DNA damage repair. The polypeptide is Taperin (Tprn) (Mus musculus (Mouse)).